The primary structure comprises 245 residues: Probable septum site-determining protein MinC (245 aa).

The segment covering 112–132 (ARERPLESAEPVAPKKPEKPP) has biased composition (basic and acidic residues). The interval 112–140 (ARERPLESAEPVAPKKPEKPPEPTVKPTR) is disordered.

It belongs to the MinC family. As to quaternary structure, interacts with MinD and FtsZ.

Its function is as follows. Cell division inhibitor that blocks the formation of polar Z ring septums. Rapidly oscillates between the poles of the cell to destabilize FtsZ filaments that have formed before they mature into polar Z rings. Prevents FtsZ polymerization. The protein is Probable septum site-determining protein MinC of Pseudomonas fluorescens (strain Pf0-1).